Reading from the N-terminus, the 306-residue chain is Aspartate carbamoyltransferase catalytic subunit (306 aa).

Carbamoyl phosphate contacts are provided by Arg55 and Thr56. Lys84 contacts L-aspartate. Carbamoyl phosphate-binding residues include Arg105, His133, and Gln136. 2 residues coordinate L-aspartate: Arg166 and Arg227. Carbamoyl phosphate-binding residues include Leu265 and Pro266.

This sequence belongs to the aspartate/ornithine carbamoyltransferase superfamily. ATCase family. As to quaternary structure, heterododecamer (2C3:3R2) of six catalytic PyrB chains organized as two trimers (C3), and six regulatory PyrI chains organized as three dimers (R2).

The enzyme catalyses carbamoyl phosphate + L-aspartate = N-carbamoyl-L-aspartate + phosphate + H(+). It participates in pyrimidine metabolism; UMP biosynthesis via de novo pathway; (S)-dihydroorotate from bicarbonate: step 2/3. Functionally, catalyzes the condensation of carbamoyl phosphate and aspartate to form carbamoyl aspartate and inorganic phosphate, the committed step in the de novo pyrimidine nucleotide biosynthesis pathway. This Neisseria meningitidis serogroup A / serotype 4A (strain DSM 15465 / Z2491) protein is Aspartate carbamoyltransferase catalytic subunit.